The chain runs to 55 residues: Large ribosomal subunit protein bL33 (55 aa).

Belongs to the bacterial ribosomal protein bL33 family.

The sequence is that of Large ribosomal subunit protein bL33 from Blochmanniella pennsylvanica (strain BPEN).